Here is a 245-residue protein sequence, read N- to C-terminus: MLLIPAIDLKEGRCVRLRQGLMEEATVFSDSPAETALHWFKQGARRLHLVDLNGAFAGVPQNLPAIKDILAAVAKDIPVQLGGGIRDLKTIGQYLDLGLNDVIIGTAAVKNPDFVREACKAFPGRIIVGLDAKDGMAAIDGWATVTGHHVIDLAKRFEDDGVNSIIYTDIGRDGMMSGVNIDATVKLAQAVRIPVIASGGLTGLDDIRALCAAEKHGVAGAITGRAIYEGSIDFAQAQQLADSLD.

Asp-8 acts as the Proton acceptor in catalysis. The Proton donor role is filled by Asp-131.

It belongs to the HisA/HisF family.

The protein resides in the cytoplasm. The enzyme catalyses 1-(5-phospho-beta-D-ribosyl)-5-[(5-phospho-beta-D-ribosylamino)methylideneamino]imidazole-4-carboxamide = 5-[(5-phospho-1-deoxy-D-ribulos-1-ylimino)methylamino]-1-(5-phospho-beta-D-ribosyl)imidazole-4-carboxamide. It functions in the pathway amino-acid biosynthesis; L-histidine biosynthesis; L-histidine from 5-phospho-alpha-D-ribose 1-diphosphate: step 4/9. This is 1-(5-phosphoribosyl)-5-[(5-phosphoribosylamino)methylideneamino] imidazole-4-carboxamide isomerase from Neisseria meningitidis serogroup C (strain 053442).